The sequence spans 336 residues: Fructose-1,6-bisphosphatase class 1 (336 aa).

Mg(2+)-binding residues include glutamate 92, aspartate 115, leucine 117, and aspartate 118. Residues 118 to 121, asparagine 211, tyrosine 244, 262 to 264, and lysine 274 contribute to the substrate site; these read DGSS and YLY. Glutamate 280 is a binding site for Mg(2+).

Belongs to the FBPase class 1 family. As to quaternary structure, homotetramer. Mg(2+) serves as cofactor.

The protein resides in the cytoplasm. It catalyses the reaction beta-D-fructose 1,6-bisphosphate + H2O = beta-D-fructose 6-phosphate + phosphate. It participates in carbohydrate biosynthesis; gluconeogenesis. This is Fructose-1,6-bisphosphatase class 1 from Vibrio cholerae serotype O1 (strain ATCC 39315 / El Tor Inaba N16961).